We begin with the raw amino-acid sequence, 450 residues long: Bifunctional protein GlmU (450 aa).

The pyrophosphorylase stretch occupies residues 1–221 (MRCIVLAAGM…SCEFIGINNR (221 aa)). UDP-N-acetyl-alpha-D-glucosamine contacts are provided by residues 6-9 (LAAG), Lys-20, Gln-69, 74-75 (GT), 96-98 (YGD), Gly-135, Glu-150, Asn-165, and Asn-219. Position 98 (Asp-98) interacts with Mg(2+). Asn-219 contributes to the Mg(2+) binding site. Residues 222–242 (IQLAQAEKFRRQWILEELMIK) are linker. The tract at residues 243–450 (GVTIVDPETT…VIDKRKKEED (208 aa)) is N-acetyltransferase. UDP-N-acetyl-alpha-D-glucosamine-binding residues include Arg-324 and Lys-342. Residue His-354 is the Proton acceptor of the active site. The UDP-N-acetyl-alpha-D-glucosamine site is built by Tyr-357 and Asn-368. Acetyl-CoA-binding residues include Ala-371, Ser-396, Ala-414, and Arg-431.

It in the N-terminal section; belongs to the N-acetylglucosamine-1-phosphate uridyltransferase family. This sequence in the C-terminal section; belongs to the transferase hexapeptide repeat family. As to quaternary structure, homotrimer. It depends on Mg(2+) as a cofactor.

Its subcellular location is the cytoplasm. The enzyme catalyses alpha-D-glucosamine 1-phosphate + acetyl-CoA = N-acetyl-alpha-D-glucosamine 1-phosphate + CoA + H(+). It catalyses the reaction N-acetyl-alpha-D-glucosamine 1-phosphate + UTP + H(+) = UDP-N-acetyl-alpha-D-glucosamine + diphosphate. The protein operates within nucleotide-sugar biosynthesis; UDP-N-acetyl-alpha-D-glucosamine biosynthesis; N-acetyl-alpha-D-glucosamine 1-phosphate from alpha-D-glucosamine 6-phosphate (route II): step 2/2. It participates in nucleotide-sugar biosynthesis; UDP-N-acetyl-alpha-D-glucosamine biosynthesis; UDP-N-acetyl-alpha-D-glucosamine from N-acetyl-alpha-D-glucosamine 1-phosphate: step 1/1. It functions in the pathway bacterial outer membrane biogenesis; LPS lipid A biosynthesis. Catalyzes the last two sequential reactions in the de novo biosynthetic pathway for UDP-N-acetylglucosamine (UDP-GlcNAc). The C-terminal domain catalyzes the transfer of acetyl group from acetyl coenzyme A to glucosamine-1-phosphate (GlcN-1-P) to produce N-acetylglucosamine-1-phosphate (GlcNAc-1-P), which is converted into UDP-GlcNAc by the transfer of uridine 5-monophosphate (from uridine 5-triphosphate), a reaction catalyzed by the N-terminal domain. The chain is Bifunctional protein GlmU from Pseudothermotoga lettingae (strain ATCC BAA-301 / DSM 14385 / NBRC 107922 / TMO) (Thermotoga lettingae).